The following is a 448-amino-acid chain: Protein kinase C and casein kinase substrate in neurons protein 2 (448 aa).

Positions 11–282 constitute an F-BAR domain; the sequence is VEVSSDSFWE…NIKTADAVED (272 aa). Residues 25–274 adopt a coiled-coil conformation; sequence KRTVKRIDDG…NIYRELEQNI (250 aa). Residues 315-386 form a disordered region; that stretch reads SRREKKKASD…DTNPFDEDTS (72 aa). A compositionally biased stretch (polar residues) spans 329–358; that stretch reads TGINQTGDQVSQPNKHSSVSSYEKNQSYPT. The NPF1 motif lies at 367–369; sequence NPF. The NPF2 motif lies at 379-381; it reads NPF. Residues 388 to 448 enclose the SH3 domain; sequence VMEVRVRALY…YPANYVEPIQ (61 aa).

Belongs to the PACSIN family. Phosphorylated on serine residues. In terms of tissue distribution, detected in intestine, cardiac muscle, lung and brain (at protein level). Expressed in all tissues tested, including, gizzard, liver, cardiac muscle, skeletal muscle and skin.

It is found in the cytoplasm. The protein localises to the cytoskeleton. The protein resides in the cytoplasmic vesicle membrane. Its subcellular location is the cell projection. It localises to the ruffle membrane. It is found in the early endosome. The protein localises to the recycling endosome membrane. The protein resides in the cell membrane. Its subcellular location is the membrane. It localises to the caveola. It is found in the cell junction. The protein localises to the focal adhesion. In terms of biological role, regulates the morphogenesis and endocytosis of caveolae. Lipid-binding protein that is able to promote the tubulation of the phosphatidic acid-containing membranes it preferentially binds. Plays a role in intracellular vesicle-mediated transport. Involved in the endocytosis of cell-surface receptors like the EGF receptor, contributing to its internalization in the absence of EGF stimulus. Essential for endothelial organization in sprouting angiogenesis, modulates CDH5-based junctions. Facilitates endothelial front-rear polarity during migration by recruiting EHD4 and MICALL1 to asymmetric adherens junctions between leader and follower cells. The protein is Protein kinase C and casein kinase substrate in neurons protein 2 (PACSIN2) of Gallus gallus (Chicken).